The following is a 160-amino-acid chain: MAPK regulated corepressor interacting protein 2 (160 aa).

N-acetylmethionine is present on M1. Residues 1 to 22 (MYTITKGPSKLVAQRRTGPTQQ) form a disordered region. The residue at position 35 (R35) is an Omega-N-methylarginine. The disordered stretch occupies residues 43–64 (LPAHLQPSAQTQGPWPLASSGP). S61 is modified (phosphoserine). The residue at position 65 (R65) is an Omega-N-methylarginine. S82 is subject to Phosphoserine.

This sequence belongs to the MCRIP family. In terms of assembly, interacts with DDX6. Interacts with MCRIP1.

It is found in the cytoplasm. The protein resides in the stress granule. The protein localises to the nucleus. This Mus musculus (Mouse) protein is MAPK regulated corepressor interacting protein 2 (Mcrip2).